Here is a 1199-residue protein sequence, read N- to C-terminus: Chromatin structure-remodeling complex subunit snf21 (1199 aa).

The HSA domain occupies 256-328; sequence QRSDRERRLK…AKQRLQALKE (73 aa). A Helicase ATP-binding domain is found at 429-594; that stretch reads ISLYNNHLNG…WALLNFVLPR (166 aa). Residue 442 to 449 participates in ATP binding; it reads DEMGLGKT. Positions 544–547 match the DEGH box motif; the sequence is DEGH. Residues 740 to 903 enclose the Helicase C-terminal domain; that stretch reads LLDRILPKLF…STPEEREAFL (164 aa). Positions 1017–1059 are disordered; that stretch reads MESEARPTRGRPKRNIASVDETPALTLNGKPKKKRGPAPDTLT. The Bromo domain occupies 1061–1171; the sequence is EHRSLLRRVC…TAMETKIEEL (111 aa).

Belongs to the SNF2/RAD54 helicase family. In terms of assembly, component of the RSC complex composed of at least arp9, arp42, rsc1, rsc4, rsc7, rsc9, rsc58, sfh1, snf21, ssr1, ssr2, ssr3 and ssr4. The complex interacts with histone and histone variant components of centromeric chromatin.

It localises to the nucleus. Helicase. Component of the chromatin structure remodeling complex (RSC), which is involved in transcription regulation and nucleosome positioning. Controls particularly membrane and organelle development genes. The protein is Chromatin structure-remodeling complex subunit snf21 (snf21) of Schizosaccharomyces pombe (strain 972 / ATCC 24843) (Fission yeast).